The chain runs to 199 residues: Outer dense fiber protein 4 (199 aa).

Residues 1–14 (MNIRSLERAGRAGK) are compositionally biased toward basic and acidic residues. The tract at residues 1–25 (MNIRSLERAGRAGKQDGVAVSPGQE) is disordered. At Ser-53 the chain carries Phosphoserine. The next 3 helical transmembrane spans lie at 68 to 88 (IAQV…VVMV), 109 to 128 (VTTK…LHIY), and 159 to 179 (LALG…IPGL).

The protein localises to the membrane. Functionally, component of the outer dense fibers (ODF) of spermatozoa which could be involved in sperm tail structure, sperm movement and general organization of cellular cytoskeleton. The protein is Outer dense fiber protein 4 (ODF4) of Bos taurus (Bovine).